A 224-amino-acid polypeptide reads, in one-letter code: Phosphoribosylformylglycinamidine synthase subunit PurQ (224 aa).

The Glutamine amidotransferase type-1 domain maps to 3–224 (FGVVVFPGSN…GLLEKVVALA (222 aa)). The Nucleophile role is filled by Cys-86. Catalysis depends on residues His-195 and Glu-197.

Part of the FGAM synthase complex composed of 1 PurL, 1 PurQ and 2 PurS subunits.

The protein localises to the cytoplasm. It carries out the reaction N(2)-formyl-N(1)-(5-phospho-beta-D-ribosyl)glycinamide + L-glutamine + ATP + H2O = 2-formamido-N(1)-(5-O-phospho-beta-D-ribosyl)acetamidine + L-glutamate + ADP + phosphate + H(+). The enzyme catalyses L-glutamine + H2O = L-glutamate + NH4(+). It functions in the pathway purine metabolism; IMP biosynthesis via de novo pathway; 5-amino-1-(5-phospho-D-ribosyl)imidazole from N(2)-formyl-N(1)-(5-phospho-D-ribosyl)glycinamide: step 1/2. In terms of biological role, part of the phosphoribosylformylglycinamidine synthase complex involved in the purines biosynthetic pathway. Catalyzes the ATP-dependent conversion of formylglycinamide ribonucleotide (FGAR) and glutamine to yield formylglycinamidine ribonucleotide (FGAM) and glutamate. The FGAM synthase complex is composed of three subunits. PurQ produces an ammonia molecule by converting glutamine to glutamate. PurL transfers the ammonia molecule to FGAR to form FGAM in an ATP-dependent manner. PurS interacts with PurQ and PurL and is thought to assist in the transfer of the ammonia molecule from PurQ to PurL. This chain is Phosphoribosylformylglycinamidine synthase subunit PurQ, found in Nostoc sp. (strain PCC 7120 / SAG 25.82 / UTEX 2576).